The following is a 389-amino-acid chain: D-alanyl-D-alanine carboxypeptidase DacF (389 aa).

Residues 1 to 23 (MKRLLSTLLIGIMLLTFAPSAFA) form the signal peptide. The active-site Acyl-ester intermediate is the S64. The active-site Proton acceptor is the K67. S124 is a catalytic residue. K230 is a binding site for substrate.

It belongs to the peptidase S11 family.

The protein localises to the secreted. The catalysed reaction is Preferential cleavage: (Ac)2-L-Lys-D-Ala-|-D-Ala. Also transpeptidation of peptidyl-alanyl moieties that are N-acyl substituents of D-alanine.. Its pathway is cell wall biogenesis; peptidoglycan biosynthesis. Its function is as follows. Removes C-terminal D-alanyl residues from sugar-peptide cell wall precursors. The chain is D-alanyl-D-alanine carboxypeptidase DacF (dacF) from Bacillus subtilis (strain 168).